A 173-amino-acid polypeptide reads, in one-letter code: Cytochrome c-type biogenesis protein CcmE (173 aa).

The Cytoplasmic segment spans residues 1–7 (MTRKSRR). Residues 8-28 (LILIAACGAVLALALGLILSA) traverse the membrane as a helical; Signal-anchor for type II membrane protein segment. Residues 29–173 (MSGSIVFFRS…DATLGQRSER (145 aa)) are Periplasmic-facing. Heme-binding residues include His-122 and Tyr-126. Residues 134-173 (ALKAQGRWQEGGGKDASKAAPKDAAKPETADATLGQRSER) form a disordered region. The span at 145 to 162 (GGKDASKAAPKDAAKPET) shows a compositional bias: basic and acidic residues.

Belongs to the CcmE/CycJ family.

It is found in the cell inner membrane. Its function is as follows. Heme chaperone required for the biogenesis of c-type cytochromes. Transiently binds heme delivered by CcmC and transfers the heme to apo-cytochromes in a process facilitated by CcmF and CcmH. The protein is Cytochrome c-type biogenesis protein CcmE of Methylorubrum extorquens (strain CM4 / NCIMB 13688) (Methylobacterium extorquens).